Reading from the N-terminus, the 712-residue chain is MVTVKSVFCGEELILETGLLAKQAHGSVTLRLGNTTILATVVAAKEPNLESDFFPLTVNYNEKYYAGGKIPGGFFKREAKPRDKEILISRIIDRPLRPLFPEGFRNEVQIIPTVLSVDTDMPTDALALIASSAALTISWIPFGGPVAAVRIGYKNGEYIINPKNSELSTSELDIIVAGSKDAILMIEGEAKEVSEEVFIGAIELAHKEMQKYIDMQNEMASLCGTQKIEQELFEFDADLVKMVTEYGRDKIESANYNPDKTKRNESMDNAFNEIEEYIKTKVEDEKLISQVKGICHSIEEEIVREAIVEKCMRPDGRALDEIRPITTMTNLIPRVHGSALFTRGQTQCLSIVTLGSEKDAQLMDDIYGKENKTFMLHYNFPPFSVGEVGRYGAPGRREIGHGNLAERSFNAVLPPKDKFPYTIRVVAEILESNGSSSMATICASTMSLLSAGVPLNASVAGIAMGLATYKDGYKILTDIQGVEDHLGDMDFKVAGTRKGITAFQLDIKLTGISAQILKEALEQAKKARYFILDKIDATIANAGEISDFAPKYKTMDVNPEKIRVLIGPGGKNIKAIIEETGSDVEIQDSGVVNIFAPDTPTLDKTIKLINSYVKDPEVGEVYDGIVKDIKDFGAFVEILPGVEGLCHISELAYKHVMNVEEVLKIGDEVKVKILDVKGGKYSLSRKALLEKPADYVEEEYNKKEKKHGKKRF.

Aspartate 484 and aspartate 490 together coordinate Mg(2+). The KH domain occupies 550–609; that stretch reads PKYKTMDVNPEKIRVLIGPGGKNIKAIIEETGSDVEIQDSGVVNIFAPDTPTLDKTIKLI. Residues 619–686 enclose the S1 motif domain; that stretch reads GEVYDGIVKD…KGGKYSLSRK (68 aa).

The protein belongs to the polyribonucleotide nucleotidyltransferase family. Requires Mg(2+) as cofactor.

It is found in the cytoplasm. It carries out the reaction RNA(n+1) + phosphate = RNA(n) + a ribonucleoside 5'-diphosphate. In terms of biological role, involved in mRNA degradation. Catalyzes the phosphorolysis of single-stranded polyribonucleotides processively in the 3'- to 5'-direction. The sequence is that of Polyribonucleotide nucleotidyltransferase from Brachyspira hyodysenteriae (strain ATCC 49526 / WA1).